The primary structure comprises 286 residues: Ribosome maturation factor RimP (286 aa).

A compositionally biased stretch (acidic residues) spans 200–224; that stretch reads LDGEDGDDTGVDAGDPDQDDADDAL. Positions 200–286 are disordered; that stretch reads LDGEDGDDTG…ANASTVKETH (87 aa). A compositionally biased stretch (basic residues) spans 248 to 267; sequence VGRKAKGKKASPKKSNAKKK. Over residues 273 to 286 the composition is skewed to polar residues; sequence AASSANASTVKETH.

The protein belongs to the RimP family.

Its subcellular location is the cytoplasm. In terms of biological role, required for maturation of 30S ribosomal subunits. This chain is Ribosome maturation factor RimP, found in Xanthobacter autotrophicus (strain ATCC BAA-1158 / Py2).